A 268-amino-acid polypeptide reads, in one-letter code: Endonuclease 8 1 (268 aa).

The Schiff-base intermediate with DNA role is filled by Pro-2. Glu-3 acts as the Proton donor in catalysis. Residue Lys-52 is the Proton donor; for beta-elimination activity of the active site. The DNA site is built by Arg-125 and Asn-166. The FPG-type zinc-finger motif lies at 234-268 (YVYRRAGEPCRVCGGVIRTALLEGRNVFWCPVCQT). Arg-258 functions as the Proton donor; for delta-elimination activity in the catalytic mechanism.

Belongs to the FPG family. The cofactor is Zn(2+).

The catalysed reaction is 2'-deoxyribonucleotide-(2'-deoxyribose 5'-phosphate)-2'-deoxyribonucleotide-DNA = a 3'-end 2'-deoxyribonucleotide-(2,3-dehydro-2,3-deoxyribose 5'-phosphate)-DNA + a 5'-end 5'-phospho-2'-deoxyribonucleoside-DNA + H(+). Involved in base excision repair of DNA damaged by oxidation or by mutagenic agents. Acts as a DNA glycosylase that recognizes and removes damaged bases. Has AP (apurinic/apyrimidinic) lyase activity and introduces nicks in the DNA strand. Cleaves the DNA backbone by beta-delta elimination to generate a single-strand break at the site of the removed base with both 3'- and 5'-phosphates. The sequence is that of Endonuclease 8 1 (nei1) from Mycobacterium bovis (strain ATCC BAA-935 / AF2122/97).